A 348-amino-acid polypeptide reads, in one-letter code: Rhodopsin (348 aa).

Position 1 is an N-acetylmethionine (methionine 1). At 1–36 the chain is on the extracellular side; that stretch reads MNGTEGPNFYVPYSNKSGVVRSPYEEPQYYLAEPWM. N-linked (GlcNAc...) asparagine glycans are attached at residues asparagine 2 and asparagine 15. A helical transmembrane segment spans residues 37-61; that stretch reads FSCLAAYMFMLIVLGFPINFLTLYV. Residues 62–73 lie on the Cytoplasmic side of the membrane; that stretch reads TIQHKKLRTPLN. Residues 74–96 form a helical membrane-spanning segment; that stretch reads YILLNLAVADLFMVICGFTTTLV. Residues 97–110 lie on the Extracellular side of the membrane; it reads TSLNGYFVFGTTGC. Cysteine 110 and cysteine 187 are oxidised to a cystine. Residues 111 to 133 form a helical membrane-spanning segment; sequence LVEGFFATTGGEVALWALVVLAI. The short motif at 134–136 is the 'Ionic lock' involved in activated form stabilization element; the sequence is ERY. Topologically, residues 134–152 are cytoplasmic; that stretch reads ERYIVVCKPMSNFRFGENH. Residues 153 to 173 form a helical membrane-spanning segment; it reads AIMGVAFTWIMALACSVPPIF. Topologically, residues 174–202 are extracellular; sequence GWSRYIPEGMQCSCGIDYYTLNPEFNNES. Glutamate 201 serves as a coordination point for Zn(2+). A helical transmembrane segment spans residues 203–224; that stretch reads FVIYMFVVHFIIPLTVIFFCYG. Topologically, residues 225–252 are cytoplasmic; that stretch reads QLVFTVKEAAAQQQESATTQKAEKEVTR. The helical transmembrane segment at 253–274 threads the bilayer; sequence MVIIMVIAFLICWVPYASVAFY. At 275–286 the chain is on the extracellular side; the sequence is IFTHQGSDFGPI. Glutamine 279 provides a ligand contact to Zn(2+). The helical transmembrane segment at 287–308 threads the bilayer; that stretch reads FMTLPAFFAKSSSIYNPVIYIM. The residue at position 296 (lysine 296) is an N6-(retinylidene)lysine. Topologically, residues 309 to 348 are cytoplasmic; that stretch reads MNKQFRNCMITTLCCGKNPLGDDEASTTASKTETSQVAPA. 2 S-palmitoyl cysteine lipidation sites follow: cysteine 322 and cysteine 323. Residues 330–348 form an interaction with SAG region; it reads DDEASTTASKTETSQVAPA. Residue serine 334 is modified to Phosphoserine. Residues threonine 335 and threonine 336 each carry the phosphothreonine modification. A Phosphoserine modification is found at serine 338. Threonine 340 and threonine 342 each carry phosphothreonine. At serine 343 the chain carries Phosphoserine.

Belongs to the G-protein coupled receptor 1 family. Opsin subfamily. As to quaternary structure, homodimer. May form a complex composed of RHO, GRK1 and RCVRN in a Ca(2+)-dependent manner; RCVRN prevents the interaction between GRK1 and RHO. Interacts with GRK1. Interacts (phosphorylated form) with SAG. Interacts with GNAT1. Interacts with GNAT3. SAG and G-proteins compete for a common binding site. Interacts with PRCD; the interaction promotes PRCD stability. Forms a complex with ASAP1 and ARF4. Forms a complex with ASAP1, RAB11A, Rabin8/RAB3IP, ARF4 and RAB11FIP3; the complex regulates Golgi-to-cilia rhodopsin/RHO transport in photoreceptors. Post-translationally, phosphorylated on some or all of the serine and threonine residues present in the C-terminal region. Contains one covalently linked retinal chromophore. Upon light absorption, the covalently bound 11-cis-retinal is converted to all-trans-retinal. After hydrolysis of the Schiff base and release of the covalently bound all-trans-retinal, active rhodopsin is regenerated by binding of a fresh molecule of 11-cis-retinal.

Its subcellular location is the membrane. The protein localises to the cell projection. It localises to the cilium. The protein resides in the photoreceptor outer segment. Photoreceptor required for image-forming vision at low light intensity. Required for photoreceptor cell viability after birth. Light-induced isomerization of 11-cis to all-trans retinal triggers a conformational change that activates signaling via G-proteins. Subsequent receptor phosphorylation mediates displacement of the bound G-protein alpha subunit by the arrestin SAG and terminates signaling. This is Rhodopsin (RHO) from Sminthopsis crassicaudata (Fat-tailed dunnart).